Consider the following 311-residue polypeptide: D-alanine--D-alanine ligase (311 aa).

Positions 105–306 (KQLYIHAGLP…FSALLDRLIE (202 aa)) constitute an ATP-grasp domain. Residue 133–188 (ADRLGLPVVVKPEHEGSSIGLSIVRNRDQLAAAVETGWQYDRRCLIEKYVHGIEIT) coordinates ATP. Residues Asp261, Glu273, and Asn275 each coordinate Mg(2+).

Belongs to the D-alanine--D-alanine ligase family. The cofactor is Mg(2+). Requires Mn(2+) as cofactor.

The protein resides in the cytoplasm. It carries out the reaction 2 D-alanine + ATP = D-alanyl-D-alanine + ADP + phosphate + H(+). It participates in cell wall biogenesis; peptidoglycan biosynthesis. Cell wall formation. The polypeptide is D-alanine--D-alanine ligase (Syntrophobacter fumaroxidans (strain DSM 10017 / MPOB)).